We begin with the raw amino-acid sequence, 392 residues long: Protein trapped in endoderm-1 (392 aa).

At 1 to 39 (MDQDMGMATGYFQDADMQMDEPAAATQSIYPHSATLFAA) the chain is on the extracellular side. The helical transmembrane segment at 40-60 (ISACVFVTIGVLGNLITLLAL) threads the bilayer. Topologically, residues 61-73 (LKSPTIREHATTA) are cytoplasmic. Residues 74–94 (FVISLSISDLLFCSFSLPLTA) traverse the membrane as a helical segment. Topologically, residues 95–110 (VRFFQESWTFGTTLCK) are extracellular. A helical transmembrane segment spans residues 111–131 (IFPVIFYGNVAVSLLSMVGIT). The Cytoplasmic segment spans residues 132–156 (LNRYILIACHSRYSQIYKPKFITLQ). The chain crosses the membrane as a helical span at residues 157–177 (LLFVWAVSFLLLLPPILGIWG). The Extracellular portion of the chain corresponds to 178 to 202 (EMGLDEATFSCTILKKEGRSIKKTL). The chain crosses the membrane as a helical span at residues 203 to 223 (FVIGFLLPCLVIIVSYSCIYI). Residues 224–268 (TVLHQKKKIRNHDNFQIAAAKGSSSSGGGSYMTTTCTRKAREDNR) are Cytoplasmic-facing. Residues 269–289 (LTVMMVTIFLCFLVCFLPLML) traverse the membrane as a helical segment. Residues 290-302 (ANVVDDERNTSYP) are Extracellular-facing. N-linked (GlcNAc...) asparagine glycosylation occurs at asparagine 298. Residues 303 to 323 (WLHIIASVMAWASSVINPIIY) form a helical membrane-spanning segment. The Cytoplasmic segment spans residues 324–392 (AASNRNYRVA…INQMCQTYSV (69 aa)). Phosphoserine is present on residues serine 359, serine 362, and serine 366. Threonine 372 is modified (phosphothreonine).

Belongs to the G-protein coupled receptor 1 family. In terms of tissue distribution, in embryos, expression is seen at highest levels in the cuprophilic cells and at lower levels in the amnioserosa, developing CNS, cardiac mesoderm primordium and midline glia.

The protein localises to the cell membrane. Its function is as follows. Essential for the first active step of germ cell migration: transepithelial migration of germ cells through the posterior midgut (PMG) epithelium. The chain is Protein trapped in endoderm-1 (Tre1) from Drosophila melanogaster (Fruit fly).